Consider the following 130-residue polypeptide: Large ribosomal subunit protein eL32 (130 aa).

The protein belongs to the eukaryotic ribosomal protein eL32 family. Part of the 50S ribosomal subunit.

This is Large ribosomal subunit protein eL32 from Pyrococcus furiosus (strain ATCC 43587 / DSM 3638 / JCM 8422 / Vc1).